Reading from the N-terminus, the 859-residue chain is Envelope glycoprotein (859 aa).

Positions 1-6 (MVSIAF) are excised as a propeptide. Residues 7–614 (YGGIPGGIST…KDLWSHIGNW (608 aa)) are Extracellular-facing. N40, N112, N141, N148, N186, N214, N233, N244, N340, N368, N399, N406, N411, and N422 each carry an N-linked (GlcNAc...) asparagine; by host glycan. The tract at residues 446–466 (FGISAIVAAIVAATAIAASAT) is fusion peptide. Residues N483 and N490 are each glycosylated (N-linked (GlcNAc...) asparagine; by host). An immunosuppression region spans residues 498–513 (LIERQIKILYAMILQT). N-linked (GlcNAc...) asparagine; by host glycosylation is found at N550 and N557. 2 coiled-coil regions span residues 576-624 (ILTT…SIIK) and 663-699 (KKFH…YYKQ). A helical transmembrane segment spans residues 615–635 (IPGLGASIIKYIVMFLLIYLL). At 636 to 859 (LTSSPKILRA…TSHVSMPQYV (224 aa)) the chain is on the cytoplasmic side. Residues 745-764 (AAINEHKNGSGGNNPHQGSL) form a disordered region.

In terms of assembly, the mature envelope protein (Env) consists of a trimer of SU-TM heterodimers attached by noncovalent interactions or by a labile interchain disulfide bond. In terms of processing, specific enzymatic cleavages in vivo yield mature proteins. Envelope glycoproteins are synthesized as an inactive precursor that is N-glycosylated and processed likely by host cell furin or by a furin-like protease in the Golgi to yield the mature SU and TM proteins. The cleavage site between SU and TM requires the minimal sequence [KR]-X-[KR]-R.

It is found in the virion membrane. Its subcellular location is the host cell membrane. Its function is as follows. The surface protein (SU) attaches the virus to the host cell by binding to its receptor. This interaction triggers the refolding of the transmembrane protein (TM) and is thought to activate its fusogenic potential by unmasking its fusion peptide. Fusion occurs at the host cell plasma membrane. Functionally, the transmembrane protein (TM) acts as a class I viral fusion protein. Under the current model, the protein has at least 3 conformational states: pre-fusion native state, pre-hairpin intermediate state, and post-fusion hairpin state. During viral and target cell membrane fusion, the coiled coil regions (heptad repeats) assume a trimer-of-hairpins structure, positioning the fusion peptide in close proximity to the C-terminal region of the ectodomain. The formation of this structure appears to drive apposition and subsequent fusion of viral and target cell membranes. Membranes fusion leads to delivery of the nucleocapsid into the cytoplasm. This Equus asinus (Donkey) protein is Envelope glycoprotein (env).